Reading from the N-terminus, the 269-residue chain is Integral membrane protein 2C (269 aa).

T39 is subject to Phosphothreonine. Residues 57–77 (VGGVCYLSMGMVVLLMGLVFA) traverse the membrane as a helical; Signal-anchor for type II membrane protein segment. Residues 138–232 (FGGGDPADII…LCNGKDTYRL (95 aa)) form the BRICHOS domain. The cysteines at positions 165 and 224 are disulfide-linked. The N-linked (GlcNAc...) asparagine glycan is linked to N171.

This sequence belongs to the ITM2 family. Interacts with BACE1. Interacts with APP. Interacts with STMN2. In terms of processing, type I membrane-bound, as well as soluble, furin has a pre-eminent role in ITM2C proteolytic processing. PCSK7 and PCSK5 may also be involved although to a lesser extent. The soluble form of PCSK7 is incapable of processing ITM2C. Fails to undergo shedding by ADAM10 and intramembrane cleavage by SPPL2B.

Its subcellular location is the lysosome membrane. It is found in the cell membrane. In terms of biological role, negative regulator of amyloid-beta peptide production. May inhibit the processing of APP by blocking its access to alpha- and beta-secretase. Binding to the beta-secretase-cleaved APP C-terminal fragment is negligible, suggesting that ITM2C is a poor gamma-secretase cleavage inhibitor. May play a role in TNF-induced cell death and neuronal differentiation. This chain is Integral membrane protein 2C (Itm2c), found in Rattus norvegicus (Rat).